Consider the following 393-residue polypeptide: Probable galacturonosyltransferase-like 8 (393 aa).

Over 1 to 4 (MSSR) the chain is Cytoplasmic. The chain crosses the membrane as a helical; Signal-anchor for type II membrane protein span at residues 5 to 25 (FSLTVVCLIALLPFVVGIRLI). Residues 26-393 (PARITSVGDG…SELTDDSSFL (368 aa)) lie on the Lumenal side of the membrane. Asn226 carries an N-linked (GlcNAc...) asparagine glycan.

It belongs to the glycosyltransferase 8 family.

The protein resides in the golgi apparatus membrane. It participates in glycan metabolism; pectin biosynthesis. In terms of biological role, may be involved in pectin and/or xylans biosynthesis in cell walls. The sequence is that of Probable galacturonosyltransferase-like 8 (GATL8) from Arabidopsis thaliana (Mouse-ear cress).